A 396-amino-acid polypeptide reads, in one-letter code: Tryptophan synthase beta chain (396 aa).

Position 88 is an N6-(pyridoxal phosphate)lysine (lysine 88).

Belongs to the TrpB family. As to quaternary structure, tetramer of two alpha and two beta chains. The cofactor is pyridoxal 5'-phosphate.

The enzyme catalyses (1S,2R)-1-C-(indol-3-yl)glycerol 3-phosphate + L-serine = D-glyceraldehyde 3-phosphate + L-tryptophan + H2O. It functions in the pathway amino-acid biosynthesis; L-tryptophan biosynthesis; L-tryptophan from chorismate: step 5/5. Its function is as follows. The beta subunit is responsible for the synthesis of L-tryptophan from indole and L-serine. The protein is Tryptophan synthase beta chain of Shewanella baltica (strain OS185).